The following is a 454-amino-acid chain: Pup--protein ligase (454 aa).

Residue Glu-9 participates in Mg(2+) binding. Arg-53 is a binding site for ATP. A Mg(2+)-binding site is contributed by Tyr-55. Asp-57 functions as the Proton acceptor in the catalytic mechanism. Glu-63 contributes to the Mg(2+) binding site. The ATP site is built by Thr-66 and Trp-420.

The protein belongs to the Pup ligase/Pup deamidase family. Pup-conjugating enzyme subfamily.

It catalyses the reaction ATP + [prokaryotic ubiquitin-like protein]-L-glutamate + [protein]-L-lysine = ADP + phosphate + N(6)-([prokaryotic ubiquitin-like protein]-gamma-L-glutamyl)-[protein]-L-lysine.. The protein operates within protein degradation; proteasomal Pup-dependent pathway. Its pathway is protein modification; protein pupylation. Functionally, catalyzes the covalent attachment of the prokaryotic ubiquitin-like protein modifier Pup to the proteasomal substrate proteins, thereby targeting them for proteasomal degradation. This tagging system is termed pupylation. The ligation reaction involves the side-chain carboxylate of the C-terminal glutamate of Pup and the side-chain amino group of a substrate lysine. This chain is Pup--protein ligase, found in Paenarthrobacter aurescens (strain TC1).